Consider the following 1100-residue polypeptide: Formin-like protein 1 (1100 aa).

Low complexity predominate over residues 1 to 13 (MGNAAGSAEQPAG). Disordered stretches follow at residues 1 to 31 (MGNA…PMPA), 167 to 200 (STDN…PKSR), 446 to 474 (RFSE…TRPS), and 510 to 635 (TPSG…AKKP). G2 carries N-myristoyl glycine lipidation. At S7 the chain carries Phosphoserine. Residues 14–28 (PAAPPPKQPAPPKQP) are compositionally biased toward pro residues. One can recognise a GBD/FH3 domain in the interval 27 to 468 (QPMPAAGELE…PPEPEKAPPA (442 aa)). A Phosphoserine modification is found at S184. Residues 517-538 (PTPGVPTGSPSPDLAPAAEPAP) are compositionally biased toward low complexity. Residues 539 to 615 (GAAPPPPPPL…PPPPPPPGGP (77 aa)) show a composition bias toward pro residues. A phosphoserine mark is found at S624 and S693. Residues 632 to 1023 (AKKPIQTKFR…QEAGADTPGK (392 aa)) enclose the FH2 domain. Residues 1008-1037 (KKEAAAQEAGADTPGKGEPPAPKSPPKARR) are disordered. Residues 1013–1023 (AQEAGADTPGK) show a composition bias toward low complexity. S1031 carries the post-translational modification Phosphoserine. One can recognise a DAD domain in the interval 1059–1090 (SDRDGAIEDIITVIKTVPFTARTGKRTSRLLC).

Belongs to the formin homology family. Interacts with RAC1, PFN1 and PFN2. Interacts (activated by RAC1) with SRGAP2 (via SH3 domain); regulates the actin filament severing activity of FMNL1. In terms of processing, myristoylation mediates membrane localization and blebbing. Expressed in heart, brain, placenta, lung, liver, skeletal muscle, kidney and pancreas.

Its subcellular location is the cytoplasm. It is found in the cell membrane. The protein localises to the cytoplasmic vesicle. The protein resides in the phagosome. It localises to the cell cortex. Its subcellular location is the cell projection. It is found in the bleb. Its function is as follows. May play a role in the control of cell motility and survival of macrophages. Plays a role in the regulation of cell morphology and cytoskeletal organization. Required in the cortical actin filament dynamics and cell shape. This is Formin-like protein 1 (FMNL1) from Homo sapiens (Human).